The following is a 143-amino-acid chain: MIKRSITRSPSRAGQAGMSLLEIIIVIVLIGAVLTLVGSRVLGGADRGKANLAKSQIQTLAGKIENFQLDTGKLPSKLDDLVTQPGGSSGWLGPYAKPVELNDPWGHTIEYRVPGDGQAFDLISLGKDGRPGGSSYDSDIKYQ.

The propeptide at 1–17 (MIKRSITRSPSRAGQAG) is leader sequence. At Met18 the chain carries N-methylmethionine. Residues 18-38 (MSLLEIIIVIVLIGAVLTLVG) traverse the membrane as a helical segment.

This sequence belongs to the GSP G family. In terms of assembly, type II secretion system is composed of four main components: the outer membrane complex, the inner membrane complex, the cytoplasmic secretion ATPase and the periplasm-spanning pseudopilus. Forms homomultimers. Interacts with pseudopilin tip complex component XpsJ as well as XpsI and XcpH. Interacts with XpsN and secretin XpsD. In terms of processing, cleaved by the prepilin peptidase. Post-translationally, methylated by prepilin peptidase at the amino group of the N-terminal methionine once the leader sequence is cleaved.

It localises to the cell inner membrane. Its function is as follows. Core component of the type II secretion system required for the energy-dependent secretion of extracellular factors such as proteases and toxins from the periplasm. Pseudopilin (pilin-like) protein that polymerizes to form the pseudopilus. Further polymerization triggers pseudopilus growth. In Xanthomonas campestris pv. campestris (strain ATCC 33913 / DSM 3586 / NCPPB 528 / LMG 568 / P 25), this protein is Type II secretion system core protein G (xpsG).